A 357-amino-acid polypeptide reads, in one-letter code: Phospho-N-acetylmuramoyl-pentapeptide-transferase (357 aa).

A run of 10 helical transmembrane segments spans residues 4–24 (QILFSGVIGLFLTLVGTPLLI), 52–72 (TMGGIAFILATIIAYFMSKVI), 77–97 (PTFSGLLVLGLMAGMGLVGFL), 115–135 (AKMAGQLIVGIAFAVLALQFA), 153–173 (FGWTIGPVLFVIWALFMILAM), 186–206 (LATGAATMVFGAYTFIGVWQF), 228–248 (PLDLAVVASALMGACFGFLWW), 255–275 (IFMGDTGSLALGGALAGLAIC), 280–300 (LLVALLGGLFVLITMSVVIQV), and 334–354 (FWIIQGMCVIVGLGLFYAGWA).

It belongs to the glycosyltransferase 4 family. MraY subfamily. Requires Mg(2+) as cofactor.

The protein resides in the cell membrane. The enzyme catalyses UDP-N-acetyl-alpha-D-muramoyl-L-alanyl-gamma-D-glutamyl-meso-2,6-diaminopimeloyl-D-alanyl-D-alanine + di-trans,octa-cis-undecaprenyl phosphate = di-trans,octa-cis-undecaprenyl diphospho-N-acetyl-alpha-D-muramoyl-L-alanyl-D-glutamyl-meso-2,6-diaminopimeloyl-D-alanyl-D-alanine + UMP. It participates in cell wall biogenesis; peptidoglycan biosynthesis. Its function is as follows. Catalyzes the initial step of the lipid cycle reactions in the biosynthesis of the cell wall peptidoglycan: transfers peptidoglycan precursor phospho-MurNAc-pentapeptide from UDP-MurNAc-pentapeptide onto the lipid carrier undecaprenyl phosphate, yielding undecaprenyl-pyrophosphoryl-MurNAc-pentapeptide, known as lipid I. This Streptomyces avermitilis (strain ATCC 31267 / DSM 46492 / JCM 5070 / NBRC 14893 / NCIMB 12804 / NRRL 8165 / MA-4680) protein is Phospho-N-acetylmuramoyl-pentapeptide-transferase.